A 1505-amino-acid polypeptide reads, in one-letter code: MLRFVTKNSQDKSSDLFSICSDRGTFVAHNRVRTDFKFDNLVFNRVYGVSQKFTLVGNPTVCFNEGSSYLEGIAKKYLTLDGGLAIDNVLNELRSTCGIPGNAVASHAYNITSWRWYDNHVALLMNMLRAYHLQVLTEQGQYSAGDIPMYHDGHVKIKLPVTIDDTAGPTQFAWPSDRSTDSYPDWAQFSESFPSIDVPYLDVRPLTVTEVNFVLMMMSKWHRRTNLAIDYEAPQLADKFAYRHALTVQDADEWIEGDRTDDQFRPPSSKVMLSALRKYVNHNRLYNQFYTAAQLLAQIMMKPVPNCAEGYAWLMHDALVNIPKFGSIRGRYPFLLSGDAALIQATALEDWSAIMAKPELVFTYAMQVSVALNTGLYLRRVKKTGFGTTIDDSYEDGAFLQPETFVQAALACCTGQDAPLNGMSDVYVTYPDLLEFDAVTQVPITVIEPAGYNIVDDHLVVVGVPVACSPYMIFPVAAFDTANPYCGNFVIKAANKYLRKGAVYDKLEAWKLAWALRVAGYDTHFKVYGDTHGLTKFYADNGDTWTHIPEFVTDGDVMEVFVTAIERRARHFVELPRLNSPAFFRSVEVSTTIYDTHVQAGAHAVYHASRINLDYVKPVSTGIQVINAGELKNYWGSVRRTQQGLRSGRSYDASCNAYRRTYSWRCPRRVDRTGGQCFSRVNVIEPSHGPRPTRYILQEPGTYPAWIRFRNRVQAVSRQKATHFLFDIVPAAVISDFTTSDTSSFAYKSHTYAVNVTALRFSDTYALYVQTDTNMTILSPAARRQASATYSQVAGFCYNTPTVMDSLANILDVDRNIRPKHFKGLRLYTRSKVTAQHHTHLRPDELVEAAAKVSPRRKYYLMCVVELLANLQVDLEAAVATILAYVLTLSEKFVPIFLDSRAIWVGEPGPDALTARLKASSGQIKSIHTADYEPLTELFELAVLMNRGVGHVSWQAEKDHRLNPDVAVVDQARLYSCVRDMFEGSKQTYKYPFMTWDDYTANRWEWVPGGSVHSQYEEDNDYIYPGQYTRNKFITVNKMPKHKISRMIASPPEVRAWTSTKYEWGKQRAIYGTDLRSTLITNFAMFRCEDVLTHKFPVGDQAEAAKVHKRVNMMLDGASSFCFDYDDFNSQHSIASMYTVLCAFRDTFSRNMSDEQAEAMNWVCESVRHMWVLDPDTKEWYRLQGTLLSGWRLTTFMNTVLNWAYMKLAGVFDLDDVQDSVHNGDDVMISLNRVSTAVRIMDAMHRINARAQPAKCNLFSISEFLRVEHGMSGGDGLGAQYLSRSCATLVHSRIESNEPLSVVRVMEADQARLRDLANRTRVQSAVTAIKEQLDKRVTKIFGVGDDVVRDIHTAHRVCGGISTDTWAPVETKIITDNEAYEIPYEIDDPSFWPGVNDYAYKVWKNFGERLEFNKIKDAVARGSRSTIALKRKARITSKKNEFANKSEWERTMYKAYKGLAVSYYANLSKFMSIPPMANIEFGQARYAMQAALDSSDPLRALQVIL.

Belongs to the totiviridae RNA-directed RNA polymerase family.

It carries out the reaction RNA(n) + a ribonucleoside 5'-triphosphate = RNA(n+1) + diphosphate. RNA-dependent RNA polymerase which replicates the viral genome. Catalyzes the transcription of fully conservative plus-strand genomic RNAs that are extruded from the virion into the cytoplasm where they function as mRNAs for translation of viral proteins and also as substrates for encapsidation to form new virions. Once encapsidated, the positive strand is converted to dsRNA by the RNA-directed RNA polymerase. Displays ssRNA-binding activity. In Saccharomyces cerevisiae virus L-A (ScV-L-A), this protein is Probable RNA-directed RNA polymerase (gag-pol).